The sequence spans 175 residues: MPRPAKGARLGGSAAHEKLLLANLAKSLFEHGRITTTEAKARRLRPVAERLVTKAKKGDIHNRRLVLQTITDKSVVHTLFTEIAPRYENRPGGYTRITKIGNRRGDNAPMAVIELVEALTVAQQATGEAEAATKRAVKEDALKKDEAPAAESVEDAKPAEDAPAAEAADDKGKDA.

The tract at residues 127 to 175 is disordered; the sequence is GEAEAATKRAVKEDALKKDEAPAAESVEDAKPAEDAPAAEAADDKGKDA. The span at 131–147 shows a compositional bias: basic and acidic residues; it reads AATKRAVKEDALKKDEA.

It belongs to the bacterial ribosomal protein bL17 family. Part of the 50S ribosomal subunit. Contacts protein L32.

This Streptomyces griseus subsp. griseus (strain JCM 4626 / CBS 651.72 / NBRC 13350 / KCC S-0626 / ISP 5235) protein is Large ribosomal subunit protein bL17.